Here is a 237-residue protein sequence, read N- to C-terminus: N-(5'-phosphoribosyl)anthranilate isomerase (237 aa).

It belongs to the TrpF family.

It catalyses the reaction N-(5-phospho-beta-D-ribosyl)anthranilate = 1-(2-carboxyphenylamino)-1-deoxy-D-ribulose 5-phosphate. It functions in the pathway amino-acid biosynthesis; L-tryptophan biosynthesis; L-tryptophan from chorismate: step 3/5. This is N-(5'-phosphoribosyl)anthranilate isomerase from Desulfitobacterium hafniense (strain DSM 10664 / DCB-2).